We begin with the raw amino-acid sequence, 501 residues long: ATP synthase subunit alpha (501 aa).

169–176 (GDRQTGKT) is a binding site for ATP.

Belongs to the ATPase alpha/beta chains family. In terms of assembly, F-type ATPases have 2 components, CF(1) - the catalytic core - and CF(0) - the membrane proton channel. CF(1) has five subunits: alpha(3), beta(3), gamma(1), delta(1), epsilon(1). CF(0) has three main subunits: a(1), b(2) and c(9-12). The alpha and beta chains form an alternating ring which encloses part of the gamma chain. CF(1) is attached to CF(0) by a central stalk formed by the gamma and epsilon chains, while a peripheral stalk is formed by the delta and b chains.

It is found in the cell membrane. It carries out the reaction ATP + H2O + 4 H(+)(in) = ADP + phosphate + 5 H(+)(out). In terms of biological role, produces ATP from ADP in the presence of a proton gradient across the membrane. The alpha chain is a regulatory subunit. This Streptococcus pneumoniae (strain Hungary19A-6) protein is ATP synthase subunit alpha.